The primary structure comprises 232 residues: 2,3,4,5-tetrahydropyridine-2,6-dicarboxylate N-acetyltransferase (232 aa).

It belongs to the transferase hexapeptide repeat family. DapH subfamily.

It catalyses the reaction (S)-2,3,4,5-tetrahydrodipicolinate + acetyl-CoA + H2O = L-2-acetamido-6-oxoheptanedioate + CoA. The protein operates within amino-acid biosynthesis; L-lysine biosynthesis via DAP pathway; LL-2,6-diaminopimelate from (S)-tetrahydrodipicolinate (acetylase route): step 1/3. Its function is as follows. Catalyzes the transfer of an acetyl group from acetyl-CoA to tetrahydrodipicolinate. This Streptococcus uberis (strain ATCC BAA-854 / 0140J) protein is 2,3,4,5-tetrahydropyridine-2,6-dicarboxylate N-acetyltransferase.